Consider the following 142-residue polypeptide: MKLKIKKLNQEALIPAYQTKEAAGFDLHSIEDVIIKPGERKLIGTGLAFEIEFGYEVQIRPRSGLAFKHGITVLNTPGTIDSDYRGEIKVLLINHSNEAFEIKKEERIAQAVIAPVVQAEIIEVEELSDTERGAGGFGSTGK.

Substrate is bound by residues 62–64 (RSG), Asn-75, 79–81 (TID), and Lys-89.

The protein belongs to the dUTPase family. The cofactor is Mg(2+).

It catalyses the reaction dUTP + H2O = dUMP + diphosphate + H(+). It participates in pyrimidine metabolism; dUMP biosynthesis; dUMP from dCTP (dUTP route): step 2/2. Functionally, this enzyme is involved in nucleotide metabolism: it produces dUMP, the immediate precursor of thymidine nucleotides and it decreases the intracellular concentration of dUTP so that uracil cannot be incorporated into DNA. This is Deoxyuridine 5'-triphosphate nucleotidohydrolase from Nautilia profundicola (strain ATCC BAA-1463 / DSM 18972 / AmH).